The following is a 42-amino-acid chain: uncharacterized protein (42 aa).

The segment at 20–42 is disordered; it reads RSGRAERGVRAHSPAWSERPTPN.

This is an uncharacterized protein from Escherichia coli.